A 1113-amino-acid polypeptide reads, in one-letter code: Antigenic protein P1 (1113 aa).

The helical transmembrane segment at 7-27 threads the bilayer; that stretch reads IIAVVAIASAIVTGVVVIVVV. N-linked (GlcNAc...) asparagine glycosylation is found at asparagine 121, asparagine 207, asparagine 225, asparagine 233, asparagine 274, asparagine 533, asparagine 576, asparagine 622, asparagine 675, asparagine 679, asparagine 730, asparagine 753, asparagine 880, asparagine 899, asparagine 907, asparagine 972, and asparagine 995. In terms of domain architecture, Peptidase M60 spans 159–473; sequence VFGQRAVAWA…SYVNMAHAFG (315 aa). Residues 648 to 800 form the PA14 domain; the sequence is LDPHQVEYEV…TEESSVDVSK (153 aa).

It is found in the membrane. This chain is Antigenic protein P1, found in Entamoeba histolytica (strain ATCC 30459 / HM-1:IMSS / ABRM).